Here is a 31-residue protein sequence, read N- to C-terminus: Cytochrome b6-f complex subunit 6 (31 aa).

A helical membrane pass occupies residues 4–24 (ITSYFGFLLVALTITSALFIG).

It belongs to the PetL family. As to quaternary structure, the 4 large subunits of the cytochrome b6-f complex are cytochrome b6, subunit IV (17 kDa polypeptide, PetD), cytochrome f and the Rieske protein, while the 4 small subunits are PetG, PetL, PetM and PetN. The complex functions as a dimer.

Its subcellular location is the plastid. The protein localises to the chloroplast thylakoid membrane. Its function is as follows. Component of the cytochrome b6-f complex, which mediates electron transfer between photosystem II (PSII) and photosystem I (PSI), cyclic electron flow around PSI, and state transitions. PetL is important for photoautotrophic growth as well as for electron transfer efficiency and stability of the cytochrome b6-f complex. This chain is Cytochrome b6-f complex subunit 6, found in Panax ginseng (Korean ginseng).